We begin with the raw amino-acid sequence, 286 residues long: F-box/SPRY domain-containing protein 1 (286 aa).

Position 2 is an N-acetylalanine (alanine 2). Residues 33 to 82 (SGVGGRLPSRVLELVFSYLELSELRSCALVCKHWYRCLHGDENSEVWRSL) enclose the F-box domain. Positions 92-284 (LRTDILCNLP…VTLVYLGKPL (193 aa)) constitute a B30.2/SPRY domain.

The protein belongs to the FBXO45/Fsn family. Forms a complex with MYCBP2 and SKP1. Interacts with HEY1; leading to FBXO45 nuclear translocation. Interacts (via SPRY domain) with CDH2. In terms of tissue distribution, expressed speciffically in the central nervous system, including cerebellum, medulla oblongata, olfactory bulb, hippocampus, cortex and brain stem.

The protein localises to the secreted. The protein resides in the postsynaptic cell membrane. Its subcellular location is the presynaptic cell membrane. It is found in the nucleus. Its pathway is protein modification; protein ubiquitination. Its function is as follows. Component of E3 ubiquitin ligase complex consisting of FBXO45, MYCBP2 and SKP1. Functions in substrate recognition but plays also an important role in assembly of the complex. Required for normal neuromuscular synaptogenesis, axon pathfinding and neuronal migration. Regulates neuron migration during brain development through interaction with N-cadherin/CDH2 after secretion via a non-classical mechanism. Plays a role in the regulation of neurotransmission at mature neurons. May control synaptic activity by controlling UNC13A via ubiquitin dependent pathway. Specifically recognizes TP73, promoting its ubiquitination and degradation. Polyubiquitinates NMNAT2, an adenylyltransferase that acts as an axon maintenance factor, and regulates its stability and degradation by the proteasome. Acts also by ubiquitinating FBXW7 during prolonged mitotic arrest and promotes FBXW7 proteasomal degradation. Induces subsequently an increase in mitotic slippage and prevents mitotic cell death. In response to influenza infection, mediates interferon-lambda receptor IFNLR1 polyubiquitination and degradation through the ubiquitin-proteasome system by docking with its intracellular receptor domain. The polypeptide is F-box/SPRY domain-containing protein 1 (Mus musculus (Mouse)).